Here is a 347-residue protein sequence, read N- to C-terminus: N-acetyl-gamma-glutamyl-phosphate reductase (347 aa).

The active site involves C151.

It belongs to the NAGSA dehydrogenase family. Type 1 subfamily.

The protein resides in the cytoplasm. It carries out the reaction N-acetyl-L-glutamate 5-semialdehyde + phosphate + NADP(+) = N-acetyl-L-glutamyl 5-phosphate + NADPH + H(+). Its pathway is amino-acid biosynthesis; L-arginine biosynthesis; N(2)-acetyl-L-ornithine from L-glutamate: step 3/4. In terms of biological role, catalyzes the NADPH-dependent reduction of N-acetyl-5-glutamyl phosphate to yield N-acetyl-L-glutamate 5-semialdehyde. The chain is N-acetyl-gamma-glutamyl-phosphate reductase from Pelotomaculum thermopropionicum (strain DSM 13744 / JCM 10971 / SI).